Here is a 322-residue protein sequence, read N- to C-terminus: Protease HtpX homolog (322 aa).

A run of 2 helical transmembrane segments spans residues 19-39 (ILLILFPCLVAVLTYLFCYLL) and 61-81 (FINLIPYIIGGVLVWFIIAYF). A Zn(2+)-binding site is contributed by histidine 165. Residue glutamate 166 is part of the active site. A Zn(2+)-binding site is contributed by histidine 169. Transmembrane regions (helical) follow at residues 175-195 (VRLLIISIVFVGIFSMLAQIA) and 216-236 (ILILVLAMIVAAIGYFFATLM). Residue glutamate 245 coordinates Zn(2+).

This sequence belongs to the peptidase M48B family. The cofactor is Zn(2+).

It localises to the cell inner membrane. This Bacteroides fragilis (strain YCH46) protein is Protease HtpX homolog.